The sequence spans 275 residues: MANYTAADVKKLREITGSGMLDCKKALEETNGDFDKAVEVLRIKGAKDVGKRAERNATEGLIAVSGNTMVEINSETDFVAKNAEFKEFAQKVADAAAAVKANTPEELAAADLDGKTAADAIQELSAKIGEKLELRRAITLEGEKLSVYLHQRSADLPPAVGVLVAYTGEGEAAQAAAHAAAMQVAALKAQYLTREDVPAEVIEKERSIAEQITREEGKPEKAIPKIVEGRLNGFYKDVCLVEQASVADSKKTVKQVMDEAGVTLTGFARYEVGQH.

Residues 76–79 (TDFV) are involved in Mg(2+) ion dislocation from EF-Tu.

Belongs to the EF-Ts family.

It localises to the cytoplasm. Functionally, associates with the EF-Tu.GDP complex and induces the exchange of GDP to GTP. It remains bound to the aminoacyl-tRNA.EF-Tu.GTP complex up to the GTP hydrolysis stage on the ribosome. The chain is Elongation factor Ts from Corynebacterium diphtheriae (strain ATCC 700971 / NCTC 13129 / Biotype gravis).